The sequence spans 323 residues: DNA repair and recombination protein RadA (323 aa).

114–121 (GEFGSGKT) contacts ATP.

Belongs to the eukaryotic RecA-like protein family.

Its function is as follows. Involved in DNA repair and in homologous recombination. Binds and assemble on single-stranded DNA to form a nucleoprotein filament. Hydrolyzes ATP in a ssDNA-dependent manner and promotes DNA strand exchange between homologous DNA molecules. The chain is DNA repair and recombination protein RadA from Picrophilus torridus (strain ATCC 700027 / DSM 9790 / JCM 10055 / NBRC 100828 / KAW 2/3).